Consider the following 245-residue polypeptide: Sugar fermentation stimulation protein homolog (245 aa).

The protein belongs to the SfsA family.

This chain is Sugar fermentation stimulation protein homolog, found in Rhodospirillum rubrum (strain ATCC 11170 / ATH 1.1.1 / DSM 467 / LMG 4362 / NCIMB 8255 / S1).